We begin with the raw amino-acid sequence, 471 residues long: Monocarboxylate transporter 4 (471 aa).

Topologically, residues 1–17 (MGGAVVDEGPTGIKAPD) are cytoplasmic. A helical transmembrane segment spans residues 18-38 (GGWGWAVLFGCFIITGFSYAF). The Extracellular segment spans residues 39 to 61 (PKAVSVFFKELMHEFGIGYSDTA). Residues 62–82 (WISSILLAMLYGTGPLCSMCV) form a helical membrane-spanning segment. Residues 83 to 84 (NR) lie on the Cytoplasmic side of the membrane. Residues 85 to 105 (FGCRPVMLVGGLFASLGMVAA) form a helical membrane-spanning segment. The Extracellular segment spans residues 106–109 (SFCR). A helical transmembrane segment spans residues 110–130 (SIIQIYLTTGVITGLGLALNF). Residues 131–149 (QPSLIMLNRYFNKRRPMAN) are Cytoplasmic-facing. The chain crosses the membrane as a helical span at residues 150-170 (GLAAAGSPVFLCALSPLGQLL). The Extracellular segment spans residues 171–179 (QDHYGWRGG). Residues 180–200 (FLILGGLLLNCCVCAALMRPL) form a helical membrane-spanning segment. The Cytoplasmic segment spans residues 201–231 (VAPQASGGAEPHGPQRPSPRLLDLSVFRDRG). The chain crosses the membrane as a helical span at residues 232–252 (FLIYAVAASIMVLGLFVPPVF). At 253–267 (VVSYAKDMGVPDTKA) the chain is on the extracellular side. Residues 268–288 (AFLLTILGFIDIFARPTAGFI) traverse the membrane as a helical segment. Residues 289–298 (TGLKKVRPYS) lie on the Cytoplasmic side of the membrane. A helical membrane pass occupies residues 299–319 (VYLFSFAMFFNGFTDLTGSTA). Over 320–321 (SD) the chain is Extracellular. Residues 322-342 (YGGLVVFCIFFGISYGMVGAL) form a helical membrane-spanning segment. Over 343–355 (QFEVLMAIVGTQK) the chain is Cytoplasmic. Residues 356–376 (FSSAIGLVLLLEAVAVLIGPP) form a helical membrane-spanning segment. Over 377 to 391 (SGGKLLDATKVYKYV) the chain is Extracellular. Residues 392–412 (FILAGAEVLTSSLVLLLGNFF) form a helical membrane-spanning segment. Topologically, residues 413–471 (CIGKRKRPEVTKPEEVASEEEKLHKPPVDVRVDSREVEHFLKAEPEKNGEVVHTPETSV) are cytoplasmic. 2 basolateral sorting signal regions span residues 429–447 (ASEE…VDSR) and 447–471 (REVE…ETSV). Residue serine 430 is modified to Phosphoserine. Phosphothreonine is present on threonine 466. The residue at position 470 (serine 470) is a Phosphoserine.

It belongs to the major facilitator superfamily. Monocarboxylate porter (TC 2.A.1.13) family. In terms of assembly, interacts with BSG; interaction mediates SLC16A3 targeting to the plasma membrane. As to expression, detected in testis, small intestine, parotid gland, lung and brain. Small amounts are detected in heart, kidney and spleen. Expressed in skeletal muscle.

The protein resides in the cell membrane. It is found in the basolateral cell membrane. The catalysed reaction is (S)-lactate(in) + H(+)(in) = (S)-lactate(out) + H(+)(out). The enzyme catalyses pyruvate(out) + H(+)(out) = pyruvate(in) + H(+)(in). Its function is as follows. Proton-dependent transporter of monocarboxylates such as L-lactate and pyruvate. Plays a predominant role in the L-lactate efflux from highly glycolytic cells. This Rattus norvegicus (Rat) protein is Monocarboxylate transporter 4 (Slc16a3).